The following is a 65-amino-acid chain: Temporin-SN1 (65 aa).

The first 22 residues, 1–22 (MFTTKKSLLLLFFLGTINLSLC), serve as a signal peptide directing secretion. A propeptide spans 23-44 (QEERNAEEERRDGDDEGGVEVQ) (removed in mature form). Residue Lys65 is modified to Lysine amide.

Belongs to the frog skin active peptide (FSAP) family. Temporin subfamily. Expressed by the skin glands.

The protein localises to the secreted. In terms of biological role, antimicrobial peptide. Active against a variety of Gram-positive bacterial strains. Not active against Gram-negative bacteria and against fungi. Shows hemolytic activity against human erythrocytes. The polypeptide is Temporin-SN1 (Sylvirana spinulosa (Fine-spined frog)).